We begin with the raw amino-acid sequence, 686 residues long: Cadmium, zinc and cobalt-transporting ATPase (686 aa).

The HMA domain occupies 1–62; the sequence is MQEYHIHNLD…FIKQNEPHLS (62 aa). Residues 1–72 are Cytoplasmic-facing; it reads MQEYHIHNLD…LSFKEATEKP (72 aa). The Cd(2+) site is built by Cys-11 and Cys-14. Residues Cys-11 and Cys-14 each coordinate Co(2+). Residues Cys-11 and Cys-14 each contribute to the Zn(2+) site. The helical transmembrane segment at 73 to 92 threads the bilayer; it reads LSFTPLIITIMVFLGAILIL. The Extracellular portion of the chain corresponds to 93–102; it reads HLNPSPLIEK. A helical transmembrane segment spans residues 103–124; the sequence is AMFFVLALVYLVSGKDVILGAF. Topologically, residues 125-131 are cytoplasmic; sequence RGLRKGQ. A helical transmembrane segment spans residues 132–151; the sequence is FFDENALMLIATIAAFFVGA. The Extracellular segment spans residues 152-154; the sequence is YEE. Residues 155 to 174 traverse the membrane as a helical segment; that stretch reads SVSIMVFYSAGEFLQKLAVS. The Cytoplasmic portion of the chain corresponds to 175–308; sequence RSKKSLKALV…ITKFSRYYTP (134 aa). Residues 309-327 form a helical membrane-spanning segment; sequence SVLFIALMIAVLPPLFSMG. Residues 328–332 lie on the Extracellular side of the membrane; that stretch reads SFDEW. The helical transmembrane segment at 333 to 350 threads the bilayer; sequence IYRGLVALMVSCPCALVI. Topologically, residues 351 to 635 are cytoplasmic; that stretch reads SVPLGYFGGV…VLAIAKKTKS (285 aa). The active-site 4-aspartylphosphate intermediate is the Asp-388. Mg(2+)-binding residues include Asp-583 and Asp-587. The helical transmembrane segment at 636 to 657 threads the bilayer; sequence IIWQNILFALGIKAVFIVLGLM. At 658-665 the chain is on the extracellular side; that stretch reads GVASLWEA. A helical transmembrane segment spans residues 666 to 681; the sequence is VFGDVGVTLLALANSM. The Cytoplasmic portion of the chain corresponds to 682–686; it reads RAMRA.

The protein belongs to the cation transport ATPase (P-type) (TC 3.A.3) family. Type IB subfamily.

Its subcellular location is the cell membrane. It catalyses the reaction Zn(2+)(in) + ATP + H2O = Zn(2+)(out) + ADP + phosphate + H(+). The enzyme catalyses Cd(2+)(in) + ATP + H2O = Cd(2+)(out) + ADP + phosphate + H(+). Couples the hydrolysis of ATP with the transport of cadmium, zinc and cobalt out of the cell. This ion efflux may influence the activity of urease, which is essential for the survival of the bacterium in the gastric environment. The sequence is that of Cadmium, zinc and cobalt-transporting ATPase (cadA) from Helicobacter pylori (strain ATCC 700392 / 26695) (Campylobacter pylori).